The chain runs to 647 residues: Frizzled-1 (647 aa).

Positions Met-1 to Gly-69 are cleaved as a signal peptide. Residues Gln-73–Trp-322 lie on the Extracellular side of the membrane. The tract at residues Ala-74–Gly-104 is disordered. Residues Pro-111–Gln-230 enclose the FZ domain. Cystine bridges form between Cys-116–Cys-177, Cys-124–Cys-170, Cys-161–Cys-198, Cys-187–Cys-227, and Cys-191–Cys-215. An N-linked (GlcNAc...) asparagine glycan is attached at Asn-130. Residue Asn-231 is glycosylated (N-linked (GlcNAc...) asparagine). The chain crosses the membrane as a helical span at residues Ile-323 to Val-343. Residues Asp-344–Pro-354 are Cytoplasmic-facing. Residues Ile-355–Leu-375 form a helical membrane-spanning segment. At Glu-376–Cys-402 the chain is on the extracellular side. The helical transmembrane segment at Thr-403 to Leu-423 threads the bilayer. The Cytoplasmic segment spans residues Ser-424–Gln-445. The chain crosses the membrane as a helical span at residues Tyr-446–Gly-466. The Extracellular segment spans residues Gln-467 to Gly-489. A helical transmembrane segment spans residues Phe-490–Phe-510. The Cytoplasmic portion of the chain corresponds to Val-511–Arg-536. Residues Ile-537–Tyr-557 traverse the membrane as a helical segment. Over Glu-558–Thr-601 the chain is Extracellular. A helical membrane pass occupies residues Val-602–Trp-622. The Cytoplasmic portion of the chain corresponds to Ser-623–Val-647. The short motif at Lys-625–Trp-630 is the Lys-Thr-X-X-X-Trp motif, mediates interaction with the PDZ domain of Dvl family members element. Residues Thr-645 to Val-647 carry the PDZ-binding motif.

This sequence belongs to the G-protein coupled receptor Fz/Smo family. In terms of assembly, interacts with MYOC. Interacts with WNT7B. (Microbial infection) Interacts with C.difficile toxin TcdB; frizzled receptors constitute the major host receptors for TcdB in the colonic epithelium. Ubiquitinated by ZNRF3, leading to its degradation by the proteasome. In terms of tissue distribution, expressed in adult heart, placenta, lung, kidney, pancreas, prostate, and ovary and in fetal lung and kidney.

It localises to the cell membrane. Its function is as follows. Receptor for Wnt proteins. Activated by WNT3A, WNT3, WNT1 and to a lesser extent WNT2, but apparently not by WNT4, WNT5A, WNT5B, WNT6, WNT7A or WNT7B. Contradictory results showing activation by WNT7B have been described for mouse. Functions in the canonical Wnt/beta-catenin signaling pathway. The canonical Wnt/beta-catenin signaling pathway leads to the activation of disheveled proteins, inhibition of GSK-3 kinase, nuclear accumulation of beta-catenin and activation of Wnt target genes. A second signaling pathway involving PKC and calcium fluxes has been seen for some family members, but it is not yet clear if it represents a distinct pathway or if it can be integrated in the canonical pathway, as PKC seems to be required for Wnt-mediated inactivation of GSK-3 kinase. Both pathways seem to involve interactions with G-proteins. May be involved in transduction and intercellular transmission of polarity information during tissue morphogenesis and/or in differentiated tissues. In terms of biological role, (Microbial infection) Acts as a receptor for C.difficile toxin TcdB in the colonic epithelium. This Homo sapiens (Human) protein is Frizzled-1 (FZD1).